The chain runs to 84 residues: Small ribosomal subunit protein uS17 (84 aa).

The protein belongs to the universal ribosomal protein uS17 family. Part of the 30S ribosomal subunit.

Functionally, one of the primary rRNA binding proteins, it binds specifically to the 5'-end of 16S ribosomal RNA. In Clostridium botulinum (strain Eklund 17B / Type B), this protein is Small ribosomal subunit protein uS17.